Consider the following 426-residue polypeptide: MDQIIVRGNGPLKGEIPITGAKNACLALMPATLLTDQPLTLTNAPRLSDIRTMTALLQSLGAEVASLQDGQVLALSSHDLTSHRADYDIVRKMRASILVLGPMLARDGHAVVSLPGGCAIGARPVDLHLRALEAMGADLDLREGYVHAKAPSGGLRGAVIDFPLVSVGATENALMAATLARGTTVINNAAREPEIVDLAECLRRMGAQIEGEGTSTITVEGVQALGGATHPVVTDRIELGTYMLAPAICGGEVECLGGRIDLVAAFCEKLDEAGIEVVETGRGLKVSRKNGRVRAVDVVTEPFPGFPTDLQAQMMALLCTAEGTSVLEEKIFENRFMHAPELARMGARIEVHGGHATVHGVEKLRGAPVMATDLRASVSLILAGLAAEGETIVSRVYHLDRGYEKVVRKLRGVGADIERIKEVADG.

Residue 22–23 participates in phosphoenolpyruvate binding; the sequence is KN. Arginine 94 is a binding site for UDP-N-acetyl-alpha-D-glucosamine. The active-site Proton donor is the cysteine 118. Position 118 is a 2-(S-cysteinyl)pyruvic acid O-phosphothioketal (cysteine 118). UDP-N-acetyl-alpha-D-glucosamine contacts are provided by residues 123–127, aspartate 309, and isoleucine 331; that span reads RPVDL.

Belongs to the EPSP synthase family. MurA subfamily.

It localises to the cytoplasm. It carries out the reaction phosphoenolpyruvate + UDP-N-acetyl-alpha-D-glucosamine = UDP-N-acetyl-3-O-(1-carboxyvinyl)-alpha-D-glucosamine + phosphate. It functions in the pathway cell wall biogenesis; peptidoglycan biosynthesis. In terms of biological role, cell wall formation. Adds enolpyruvyl to UDP-N-acetylglucosamine. The chain is UDP-N-acetylglucosamine 1-carboxyvinyltransferase from Paracoccus denitrificans (strain Pd 1222).